The primary structure comprises 201 residues: Retinol-binding protein 4 (201 aa).

The signal sequence occupies residues 1–18 (MEWVWALVLLAALGGGSA). 3 cysteine pairs are disulfide-bonded: C22/C178, C88/C192, and C138/C147. Q116 serves as a coordination point for substrate. An Omega-N-methylarginine modification is found at R139.

The protein belongs to the calycin superfamily. Lipocalin family. Interacts with TTR. Interaction with TTR prevents its loss by filtration through the kidney glomeruli. Interacts with STRA6.

It is found in the secreted. Functionally, retinol-binding protein that mediates retinol transport in blood plasma. Delivers retinol from the liver stores to the peripheral tissues. Transfers the bound all-trans retinol to STRA6, that then facilitates retinol transport across the cell membrane. This chain is Retinol-binding protein 4 (Rbp4), found in Mus musculus (Mouse).